The primary structure comprises 630 residues: Putative adenylate cyclase regulatory protein (630 aa).

The segment at 10 to 46 adopts an RING-type zinc-finger fold; it reads CAVCREPWAEGALELFPCRHVFCTVCVVERWRCPSCQ. 18 LRR repeats span residues 184–206, 207–230, 231–251, 255–277, 278–301, 302–324, 325–347, 348–370, 371–393, 394–416, 417–439, 440–462, 463–485, 486–508, 509–531, 532–554, 555–577, and 578–599; these read FLVH…CRLK, TLEA…CALP, QLTS…RCIH, KLKV…GGMR, SLEK…CKFS, NLRE…KNLI, NLKV…ERLV, NLDK…ANLS, NLKE…QDLN, NLEV…KNLS, KMRE…ETLK, GLEE…WSLH, HLRV…EGIT, GLEE…WNLR, NVCV…QCLT, GLEE…GNLR, NLKC…DRLV, and NLEK…MELM.

Its function is as follows. May interact with adenylate cyclase to regulate its activity. May be involved in the postranscriptional regulation of genes in VSG expression sites. The chain is Putative adenylate cyclase regulatory protein (ESAG8C) from Trypanosoma equiperdum.